Here is a 275-residue protein sequence, read N- to C-terminus: Hydroxyethylthiazole kinase (275 aa).

A substrate-binding site is contributed by Met-57. ATP is bound by residues Arg-132 and Ser-178. Residue Gly-205 participates in substrate binding.

Belongs to the Thz kinase family. The cofactor is Mg(2+).

It carries out the reaction 5-(2-hydroxyethyl)-4-methylthiazole + ATP = 4-methyl-5-(2-phosphooxyethyl)-thiazole + ADP + H(+). The protein operates within cofactor biosynthesis; thiamine diphosphate biosynthesis; 4-methyl-5-(2-phosphoethyl)-thiazole from 5-(2-hydroxyethyl)-4-methylthiazole: step 1/1. Functionally, catalyzes the phosphorylation of the hydroxyl group of 4-methyl-5-beta-hydroxyethylthiazole (THZ). The chain is Hydroxyethylthiazole kinase from Clavibacter sepedonicus (Clavibacter michiganensis subsp. sepedonicus).